We begin with the raw amino-acid sequence, 740 residues long: Phosphoribosylformylglycinamidine synthase subunit PurL (740 aa).

Residue His-53 is part of the active site. 2 residues coordinate ATP: Tyr-56 and Lys-95. Position 97 (Glu-97) interacts with Mg(2+). Residues 98-101 and Arg-120 contribute to the substrate site; that span reads SHNH. The active-site Proton acceptor is the His-99. Asp-121 serves as a coordination point for Mg(2+). Gln-244 serves as a coordination point for substrate. A Mg(2+)-binding site is contributed by Asp-272. 316–318 lines the substrate pocket; the sequence is ESQ. ATP is bound by residues Asp-497 and Gly-534. A Mg(2+)-binding site is contributed by Asn-535. Ser-537 provides a ligand contact to substrate.

It belongs to the FGAMS family. In terms of assembly, monomer. Part of the FGAM synthase complex composed of 1 PurL, 1 PurQ and 2 PurS subunits.

The protein resides in the cytoplasm. The catalysed reaction is N(2)-formyl-N(1)-(5-phospho-beta-D-ribosyl)glycinamide + L-glutamine + ATP + H2O = 2-formamido-N(1)-(5-O-phospho-beta-D-ribosyl)acetamidine + L-glutamate + ADP + phosphate + H(+). It participates in purine metabolism; IMP biosynthesis via de novo pathway; 5-amino-1-(5-phospho-D-ribosyl)imidazole from N(2)-formyl-N(1)-(5-phospho-D-ribosyl)glycinamide: step 1/2. Functionally, part of the phosphoribosylformylglycinamidine synthase complex involved in the purines biosynthetic pathway. Catalyzes the ATP-dependent conversion of formylglycinamide ribonucleotide (FGAR) and glutamine to yield formylglycinamidine ribonucleotide (FGAM) and glutamate. The FGAM synthase complex is composed of three subunits. PurQ produces an ammonia molecule by converting glutamine to glutamate. PurL transfers the ammonia molecule to FGAR to form FGAM in an ATP-dependent manner. PurS interacts with PurQ and PurL and is thought to assist in the transfer of the ammonia molecule from PurQ to PurL. The chain is Phosphoribosylformylglycinamidine synthase subunit PurL from Rhodospirillum rubrum (strain ATCC 11170 / ATH 1.1.1 / DSM 467 / LMG 4362 / NCIMB 8255 / S1).